We begin with the raw amino-acid sequence, 432 residues long: Polypyrimidine tract-binding protein homolog 3 (432 aa).

RRM domains lie at 6–80, 98–187, 245–319, and 355–429; these read KVVH…FSSH, NRIL…YNND, CTVL…FSKH, and KMIH…FSQL.

It is found in the nucleus. Its function is as follows. Plays a role in pre-mRNA splicing. Binds to the polypyrimidine tract of introns. May promote the binding of U2 snRNP to pre-mRNA. This is Polypyrimidine tract-binding protein homolog 3 from Arabidopsis thaliana (Mouse-ear cress).